The primary structure comprises 405 residues: Multi-drug resistance efflux pump PmrA homolog (405 aa).

12 helical membrane passes run 13–33, 50–70, 88–108, 111–131, 147–167, 170–190, 216–236, 254–274, 286–306, 308–328, 350–370, and 374–394; these read LFITWIGCFFVGSSFSLVMPF, LYSGLAFSLPALASGLVAPIW, IVMTLTMGGIAFAPNVWWLLG, LLMGFFSGYIPNSTAMIASQA, MVSGTLIGPSLGGLLAEWFGM, VFLIVGALLALATLLTIFFVH, ILFGLLVTTFIIQITSQSIEP, FISGLIVSAVGLSAMLSSSFL, LILIGLVFTFIIYLPMAFVQS, LQLGILRFLLGFGTGALTPSV, MCSNLGMVTGPLVGSAIAGYI, and AAIVGTSLFVIVNIIWSFINF.

The protein belongs to the major facilitator superfamily. TCR/Tet family.

It localises to the cell membrane. Its function is as follows. Efflux pump for various substrates. This is Multi-drug resistance efflux pump PmrA homolog (pmrA) from Lactococcus lactis subsp. lactis (strain IL1403) (Streptococcus lactis).